A 615-amino-acid chain; its full sequence is Sodium-dependent noradrenaline transporter (615 aa).

Residues 1-28 (MLLARMNPQVQPENGGAGPGSEQPPRKR) are disordered. The Cytoplasmic segment spans residues 1-60 (MLLARMNPQVQPENGGAGPGSEQPPRKRKEVLVVKERNGVQCLLASRDGDEQPRETWGKK). A helical membrane pass occupies residues 61-86 (IDFLLSVVGFAVDLANVWRFPYLCYK). Na(+)-binding residues include glycine 69, alanine 71, and valine 72. Aspartate 73 is a (R)-noradrenaline binding site. Residue aspartate 73 participates in dopamine binding. Position 76 (asparagine 76) interacts with Na(+). The (R)-noradrenaline site is built by tyrosine 85 and lysine 86. Residues 87–90 (NGGG) lie on the Extracellular side of the membrane. A helical membrane pass occupies residues 91–114 (AFLIPYTLFLIIAGMPLFYMELAL). Residues 115–133 (GQYNREGAATVWKICPFFK) lie on the Cytoplasmic side of the membrane. A helical transmembrane segment spans residues 134–164 (GVGYAVILIALYVGFYYNVIIAWSLYYLFSS). (R)-noradrenaline is bound by residues alanine 143 and glycine 147. Alanine 143 is a dopamine binding site. At 165-231 (FTPTLPWTDC…SSGIHDIGLP (67 aa)) the chain is on the extracellular side. Residues cysteine 174 and cysteine 183 are joined by a disulfide bond. Asparagine 182, asparagine 190, and asparagine 196 each carry an N-linked (GlcNAc...) asparagine glycan. Residues 232 to 252 (QWQLLLCLIIVVIVLFFSLWK) traverse the membrane as a helical segment. At 253–255 (GVK) the chain is on the cytoplasmic side. A helical membrane pass occupies residues 256–280 (TSGKVVWITATLPYLVLFVLLVHGI). Topologically, residues 281-304 (TLPGASNGINAYLHIDFYRLKEAT) are extracellular. A helical membrane pass occupies residues 305–330 (VWIDAATQIFFSLGAGFGVLIAFASY). Phenylalanine 315 provides a ligand contact to (R)-noradrenaline. Dopamine is bound at residue phenylalanine 315. Serine 316 is a Na(+) binding site. At 331-336 (NKFDNN) the chain is on the cytoplasmic side. The helical transmembrane segment at 337–360 (CYRDALLTSTINCVTSFISGFAIF) threads the bilayer. Na(+) is bound at residue asparagine 348. The Extracellular segment spans residues 361–400 (SILGYMAHEHKVNIEDVATEGAGLVFILYPEAISTLSGST). Glutamate 380 lines the (R)-noradrenaline pocket. Dopamine is bound at residue glutamate 380. A helical transmembrane segment spans residues 401–426 (FWAIVFFIMLLALGIDSSMGGMEAVI). 2 residues coordinate Na(+): aspartate 416 and serine 417. Topologically, residues 427–441 (TGLADDFQVLKRHRK) are cytoplasmic. The chain crosses the membrane as a helical span at residues 442-462 (LFTFAVSFGTFLLALFCITKG). A topological domain (extracellular) is located at residue glycine 463. Residues 464–490 (IYVLTLLDTFAAGTSILFAVLMEAIGV) traverse the membrane as a helical segment. Topologically, residues 491 to 520 (SWFYGVDRFSNDIQQMMGFKPGLYWRLCWK) are cytoplasmic. Residues 521–543 (FVSPAFLLFVVIVSIINFKPLTY) form a helical membrane-spanning segment. Residues 544–546 (DDY) lie on the Extracellular side of the membrane. A helical transmembrane segment spans residues 547–567 (IFPLWANWVGWGIAGSSMVLV). Residues 568-615 (PAYIVYKFFSTRGSIRERLAYGITPASEHHLVAQRDIRQFQLQHWLAI) lie on the Cytoplasmic side of the membrane.

Belongs to the sodium:neurotransmitter symporter (SNF) (TC 2.A.22) family. SLC6A2 subfamily. In terms of assembly, monomer. Can form homodimers in the cell membrane; homodimerization is mostly mediated by cholesterol and lipids, and regulates neurotransmitter transport activity. Interacts with PRKCABP. Palmitoylated. Palmitoylation regulates protein levels and neurotransmitter transport.

It is found in the cell membrane. It localises to the cell projection. The protein localises to the axon. Its subcellular location is the synapse. The protein resides in the synaptosome. It carries out the reaction (R)-noradrenaline(out) + chloride(out) + Na(+)(out) = (R)-noradrenaline(in) + chloride(in) + Na(+)(in). It catalyses the reaction dopamine(out) + chloride(out) + Na(+)(out) = dopamine(in) + chloride(in) + Na(+)(in). The catalysed reaction is dopamine(out) + chloride(out) + 2 Na(+)(out) = dopamine(in) + chloride(in) + 2 Na(+)(in). Its activity is regulated as follows. Inhibited by nisoxetine, oxaprotiline and desipramin. Mediates sodium- and chloride-dependent transport of norepinephrine (also known as noradrenaline), the primary signaling neurotransmitter in the autonomic sympathetic nervous system. Is responsible for norepinephrine re-uptake and clearance from the synaptic cleft, thus playing a crucial role in norepinephrine inactivation and homeostasis. Can also mediate sodium- and chloride-dependent transport of dopamine. This Bos taurus (Bovine) protein is Sodium-dependent noradrenaline transporter (SLC6A2).